Reading from the N-terminus, the 270-residue chain is Elongation factor Tu (270 aa).

Positions 1-103 (GILVVSAADG…AVDDYIPTPE (103 aa)) constitute a tr-type G domain. 35–38 (NKVD) is a binding site for GTP.

The protein belongs to the TRAFAC class translation factor GTPase superfamily. Classic translation factor GTPase family. EF-Tu/EF-1A subfamily. Monomer.

The protein localises to the cytoplasm. It carries out the reaction GTP + H2O = GDP + phosphate + H(+). Its function is as follows. GTP hydrolase that promotes the GTP-dependent binding of aminoacyl-tRNA to the A-site of ribosomes during protein biosynthesis. This chain is Elongation factor Tu (tuf), found in Staphylococcus warneri.